A 355-amino-acid chain; its full sequence is Inositol polyphosphate multikinase (355 aa).

Methionine 1 bears the N-acetylmethionine mark. An ATP-binding site is contributed by lysine 31. The residue at position 97 (serine 97) is a Phosphoserine. ATP-binding positions include 118 to 120 and aspartate 131; that span reads ENL. Substrate is bound at residue 127–135; sequence PNILDIKLG. 2 residues coordinate Ca(2+): glutamate 271 and asparagine 274. Residues 284–304 are compositionally biased toward acidic residues; sequence FIDDDDDDDDNDDDDDDDAEG. Residues 284–317 are disordered; that stretch reads FIDDDDDDDDNDDDDDDDAEGSSEGPKDKKTTGS. Aspartate 325 provides a ligand contact to ATP. A Ca(2+)-binding site is contributed by glycine 334.

The protein belongs to the inositol phosphokinase (IPK) family. In terms of assembly, interacts with ARG80 and MCM1. It depends on Ca(2+) as a cofactor.

The protein resides in the nucleus. It carries out the reaction 1D-myo-inositol 1,4,5-trisphosphate + 2 ATP = 1D-myo-inositol 1,3,4,5,6-pentakisphosphate + 2 ADP + 2 H(+). The catalysed reaction is 1D-myo-inositol 1,4,5-trisphosphate + ATP = 1D-myo-inositol 1,4,5,6-tetrakisphosphate + ADP + H(+). The enzyme catalyses 1D-myo-inositol 1,4,5-trisphosphate + ATP = 1D-myo-inositol 1,3,4,5-tetrakisphosphate + ADP + H(+). It catalyses the reaction 1D-myo-inositol 1,4,5,6-tetrakisphosphate + ATP = 1D-myo-inositol 1,3,4,5,6-pentakisphosphate + ADP + H(+). It carries out the reaction a 1,2-diacyl-sn-glycero-3-phospho-(1D-myo-inositol-4,5-bisphosphate) + ATP = a 1,2-diacyl-sn-glycero-3-phospho-(1D-myo-inositol-3,4,5-trisphosphate) + ADP + H(+). In terms of biological role, inositol phosphate kinase with both monophosphoinositol and diphosphoinositol polyphosphate synthase activities. Able to phosphorylate inositol 1,4,5-trisphosphate (Ins(1,4,5)P3) on both the carbon-3 and carbon-6 positions to synthesize inositol 1,3,4,5-tetrakisphosphate (Ins(1,3,4,5)P4) and inositol 1,4,5,6-tetrakisphosphate (Ins(1,4,5,6)P4), and then to subsequently phosphorylate and convert either isomer of InsP4 to inositol 1,3,4,5,6-pentakisphosphate (Ins(1,3,4,5,6)P5). Its predominant in vivo catalytic function is to convert Ins(1,4,5)P3 to Ins(1,4,5,6)P4 to Ins(1,3,4,5,6)P5 via 6- and 3-kinase activities. It can also use Ins(1,3,4,5,6)P5 as a substrate and act as a diphosphoinositol polyphosphate synthase to generate two different isomers of PP-InsP4. Also has a role in transcription regulation. Forms a complex with ARG80, ARG81 and MCM1 (ArgR-MCM1), which coordinates the expression of arginine anabolic and catabolic genes in response to arginine. Recruits ARG80 and MCM21 to stabilize them. Neither the kinase activity nor inositol phosphates are required for the formation of ArgR-MCM1 transcriptional complexes on DNA promoter elements and the control of arginine metabolism. In contrast, only the catalytic activity is required for PHO gene repression by phosphate and for NCR gene activation in response to nitrogen availability, indicating a role for inositol pyrophosphates in these controls. Inositol polyphosphates may be involved in the regulation of chromatin remodeling of transcription. Regulates nuclear mRNA export via inositol phosphate metabolism. Also has lipid kinase activity, transforming the lipid inositol phosphatidylinositol 4,5-bisphosphate (PI(4,5)P2) into phosphatidylinositol 3,4,5-trisphosphate (PI(3,4,5)P3) in the nucleus. Its kinase activity is necessary for the propagation of most [PSI+] prion variants. This Saccharomyces cerevisiae (strain ATCC 204508 / S288c) (Baker's yeast) protein is Inositol polyphosphate multikinase (ARG82).